The following is a 234-amino-acid chain: Large ribosomal subunit protein bL25 (234 aa).

This sequence belongs to the bacterial ribosomal protein bL25 family. CTC subfamily. As to quaternary structure, part of the 50S ribosomal subunit; part of the 5S rRNA/L5/L18/L25 subcomplex. Contacts the 5S rRNA. Binds to the 5S rRNA independently of L5 and L18.

Functionally, this is one of the proteins that binds to the 5S RNA in the ribosome where it forms part of the central protuberance. In Rhodopseudomonas palustris (strain BisA53), this protein is Large ribosomal subunit protein bL25.